The following is a 190-amino-acid chain: Putative cyclic ADP-D-ribose synthase ThsB (190 aa).

This sequence belongs to the Thoeris B TIR-like family. As to quaternary structure, homodimer.

The protein resides in the cytoplasm. Activated upon phage infection. Functionally, TIR-like domain-containing component of the Thoeris antiviral defense system, composed of ThsA and ThsB. Expression of ThsA and ThsB in B.subtilis (strain BEST7003) confers resistance to phages SBSphiC, SBSphiJ and SPO1. Phage infection activates this protein, generating a signal molecule that in turn activates ThsA. Probably hydrolyzes NAD(+) to make a cyclic ADP-D-ribose (cADPR) signaling molecule; might make 3'cADPR. The protein is Putative cyclic ADP-D-ribose synthase ThsB of Bacillus amyloliquefaciens (strain Y2) (Bacillus amyloliquefaciens subsp. plantarum (strain B9601-Y2)).